Here is a 59-residue protein sequence, read N- to C-terminus: Salivary thrombin inhibitor XC-43 (59 aa).

The N-terminal stretch at 1–23 is a signal peptide; sequence MNLQFLFIFIAFCVMLFAQIVTA.

As to quaternary structure, interacts with human F2 (thrombin). In terms of tissue distribution, salivary gland (at protein level).

It localises to the secreted. Anticoagulant protein that acts as a competitive inhibitor of host thrombin. Inhibits thrombin-mediated host platelet aggregation. This chain is Salivary thrombin inhibitor XC-43, found in Xenopsylla cheopis (Oriental rat flea).